The chain runs to 124 residues: Small ribosomal subunit protein uS12 (124 aa).

At aspartate 89 the chain carries 3-methylthioaspartic acid.

Belongs to the universal ribosomal protein uS12 family. As to quaternary structure, part of the 30S ribosomal subunit. Contacts proteins S8 and S17. May interact with IF1 in the 30S initiation complex.

In terms of biological role, with S4 and S5 plays an important role in translational accuracy. Interacts with and stabilizes bases of the 16S rRNA that are involved in tRNA selection in the A site and with the mRNA backbone. Located at the interface of the 30S and 50S subunits, it traverses the body of the 30S subunit contacting proteins on the other side and probably holding the rRNA structure together. The combined cluster of proteins S8, S12 and S17 appears to hold together the shoulder and platform of the 30S subunit. This is Small ribosomal subunit protein uS12 from Psychrobacter sp. (strain PRwf-1).